We begin with the raw amino-acid sequence, 79 residues long: uncharacterized protein (79 aa).

One can recognise a SpoVT-AbrB domain in the interval 10–60 (EAVLTMDSKGQILLPKELRERAGLKAGDRLVAIAGCDENEEVCCLILVKAE).

This is an uncharacterized protein from Archaeoglobus fulgidus (strain ATCC 49558 / DSM 4304 / JCM 9628 / NBRC 100126 / VC-16).